The sequence spans 260 residues: uncharacterized protein (260 aa).

Residues 8 to 166 (LALGSGGARG…VDRIPVSVVK (159 aa)) enclose the PNPLA domain. The GXSXG signature appears at 39-43 (GSSMG). Residue S41 is the Nucleophile of the active site. The active-site Proton acceptor is D153. The short motif at 153-155 (DGA) is the DGA/G element.

The protein belongs to the NTE family.

This is an uncharacterized protein from Bacillus subtilis (strain 168).